Reading from the N-terminus, the 299-residue chain is Ankyrin repeat domain-containing protein 54 (299 aa).

The tract at residues 1-27 is disordered; sequence MAATGGGAEDESRSGRSSSEGECAVAP. Alanine 2 carries the N-acetylalanine modification. Serine 62 carries the post-translational modification Phosphoserine. The Nuclear localization signal (NLS) motif lies at 98 to 116; sequence RRLGPTGKEVHALKRLRDS. 4 ANK repeats span residues 108 to 137, 141 to 170, 174 to 203, and 207 to 239; these read HALK…DPCA, KGRT…DPNQ, LGNT…RVDA, and AGRT…EVKQ. Residues 140–240 form an LYN-binding region; that stretch reads DKGRTALHFA…EAVRLEVKQI (101 aa). A Nuclear export signal (NES) motif is present at residues 282 to 292; sequence LLASFTSLSLQ.

Interacts (via ankyrin repeat region) with LYN (via SH3-domain) in an activation-independent status of LYN. Forms a multiprotein complex with LYN and HCLS1. Interacts with TSN2, VAV1, DBNL and LASP1.

It is found in the nucleus. The protein localises to the cytoplasm. The protein resides in the midbody. Plays an important role in regulating intracellular signaling events associated with erythroid terminal differentiation. The chain is Ankyrin repeat domain-containing protein 54 (Ankrd54) from Rattus norvegicus (Rat).